Reading from the N-terminus, the 322-residue chain is Protein lin-56 (322 aa).

The disordered stretch occupies residues 264 to 322; sequence SSQKLQQNGFPEKVEQMDKYSNKLKDEASDKKYEKPGKKDYVEEEGYWAPITDSEDDEA. Over residues 275 to 304 the composition is skewed to basic and acidic residues; that stretch reads EKVEQMDKYSNKLKDEASDKKYEKPGKKDY.

As to expression, widely expressed throughout embryonic development. Expressed in the six multipotent ventral ectodermal blast cells, P3.p-P8.p, which generate the vulva and in their descendants throughout vulval development.

Its subcellular location is the nucleus. Functionally, required for translation, stability and/or localization of lin-15a. The polypeptide is Protein lin-56 (lin-56) (Caenorhabditis elegans).